The sequence spans 385 residues: 1-deoxy-D-xylulose 5-phosphate reductoisomerase (385 aa).

NADPH contacts are provided by Thr10, Gly11, Ser12, Ile13, Gly36, Asn38, and Asn122. Lys123 is a 1-deoxy-D-xylulose 5-phosphate binding site. Position 124 (Glu124) interacts with NADPH. Asp148 contributes to the Mn(2+) binding site. 4 residues coordinate 1-deoxy-D-xylulose 5-phosphate: Ser149, Glu150, Ser174, and His197. Glu150 is a Mn(2+) binding site. An NADPH-binding site is contributed by Gly203. 1-deoxy-D-xylulose 5-phosphate is bound by residues Ser210, Asn215, Lys216, and Glu219. Glu219 is a Mn(2+) binding site.

Belongs to the DXR family. It depends on Mg(2+) as a cofactor. Mn(2+) serves as cofactor.

It carries out the reaction 2-C-methyl-D-erythritol 4-phosphate + NADP(+) = 1-deoxy-D-xylulose 5-phosphate + NADPH + H(+). Its pathway is isoprenoid biosynthesis; isopentenyl diphosphate biosynthesis via DXP pathway; isopentenyl diphosphate from 1-deoxy-D-xylulose 5-phosphate: step 1/6. Functionally, catalyzes the NADPH-dependent rearrangement and reduction of 1-deoxy-D-xylulose-5-phosphate (DXP) to 2-C-methyl-D-erythritol 4-phosphate (MEP). This is 1-deoxy-D-xylulose 5-phosphate reductoisomerase from Citrifermentans bemidjiense (strain ATCC BAA-1014 / DSM 16622 / JCM 12645 / Bem) (Geobacter bemidjiensis).